Consider the following 464-residue polypeptide: tRNA modification GTPase MnmE (464 aa).

(6S)-5-formyl-5,6,7,8-tetrahydrofolate-binding residues include R23, E84, and R123. Residues 216–386 enclose the TrmE-type G domain; the sequence is GARATLVGRP…LGATVARLLL (171 aa). N226 provides a ligand contact to K(+). Residues 226–231, 245–251, and 270–273 each bind GTP; these read NAGKSS, TPIPGTT, and DTAG. S230 contacts Mg(2+). Positions 245, 247, and 250 each coordinate K(+). Residue T251 coordinates Mg(2+). K464 serves as a coordination point for (6S)-5-formyl-5,6,7,8-tetrahydrofolate.

Belongs to the TRAFAC class TrmE-Era-EngA-EngB-Septin-like GTPase superfamily. TrmE GTPase family. In terms of assembly, homodimer. Heterotetramer of two MnmE and two MnmG subunits. Requires K(+) as cofactor.

It localises to the cytoplasm. Functionally, exhibits a very high intrinsic GTPase hydrolysis rate. Involved in the addition of a carboxymethylaminomethyl (cmnm) group at the wobble position (U34) of certain tRNAs, forming tRNA-cmnm(5)s(2)U34. The polypeptide is tRNA modification GTPase MnmE (Roseiflexus castenholzii (strain DSM 13941 / HLO8)).